Consider the following 354-residue polypeptide: Fructose-bisphosphate aldolase (354 aa).

Serine 61 is a binding site for D-glyceraldehyde 3-phosphate. Residue aspartate 104 is the Proton donor of the active site. 4 residues coordinate Zn(2+): histidine 105, aspartate 139, glutamate 169, and histidine 221. Residue glycine 222 participates in dihydroxyacetone phosphate binding. Zn(2+) is bound at residue histidine 260. Residues 261–263 (GGS) and 282–285 (NIDT) each bind dihydroxyacetone phosphate.

This sequence belongs to the class II fructose-bisphosphate aldolase family. In terms of assembly, homodimer. Requires Zn(2+) as cofactor.

It carries out the reaction beta-D-fructose 1,6-bisphosphate = D-glyceraldehyde 3-phosphate + dihydroxyacetone phosphate. It participates in carbohydrate degradation; glycolysis; D-glyceraldehyde 3-phosphate and glycerone phosphate from D-glucose: step 4/4. In terms of biological role, catalyzes the aldol condensation of dihydroxyacetone phosphate (DHAP or glycerone-phosphate) with glyceraldehyde 3-phosphate (G3P) to form fructose 1,6-bisphosphate (FBP) in gluconeogenesis and the reverse reaction in glycolysis. The sequence is that of Fructose-bisphosphate aldolase (fba) from Campylobacter jejuni subsp. jejuni serotype O:23/36 (strain 81-176).